Reading from the N-terminus, the 284-residue chain is Large ribosomal subunit protein uL2 (284 aa).

The disordered stretch occupies residues 232-284 (RGTAMNPVDHPHGGGEGRHNGYIPRTPWGKVTKGLKTRDKRKSNKWIVKDRRK). Residues 240 to 250 (DHPHGGGEGRH) are compositionally biased toward basic and acidic residues. Positions 264 to 284 (KGLKTRDKRKSNKWIVKDRRK) are enriched in basic residues.

Belongs to the universal ribosomal protein uL2 family. Part of the 50S ribosomal subunit. Forms a bridge to the 30S subunit in the 70S ribosome.

One of the primary rRNA binding proteins. Required for association of the 30S and 50S subunits to form the 70S ribosome, for tRNA binding and peptide bond formation. It has been suggested to have peptidyltransferase activity; this is somewhat controversial. Makes several contacts with the 16S rRNA in the 70S ribosome. This Chlamydia abortus (strain DSM 27085 / S26/3) (Chlamydophila abortus) protein is Large ribosomal subunit protein uL2.